The primary structure comprises 796 residues: ER degradation-enhancing alpha-mannosidase-like protein 1 (796 aa).

A signal peptide spans Met-1 to Cys-20. An N-linked (GlcNAc...) asparagine glycan is attached at Asn-86. Glu-372 acts as the Proton donor in catalysis. Thr-495 is a binding site for Ca(2+). 3 N-linked (GlcNAc...) asparagine glycosylation sites follow: Asn-517, Asn-672, and Asn-762.

The protein belongs to the glycosyl hydrolase 47 family. In terms of assembly, interacts with PDI1. Requires Ca(2+) as cofactor.

It is found in the endoplasmic reticulum lumen. It carries out the reaction Hydrolysis of terminal, non-reducing alpha-D-mannose residues in alpha-D-mannosides.. It functions in the pathway protein modification; protein glycosylation. Its function is as follows. Alpha-1,2-specific exomannosidase involved in endoplasmic reticulum-associated degradation (ERAD). Delivers misfolded glycoproteins to proteasomes. Forms a complex with PDI1 to process unfolded protein-bound Man8GlcNAc2 oligosaccharides to Man7GlcNAc2, promoting degradation in unfolded protein response. In Saccharomyces cerevisiae (strain ATCC 204508 / S288c) (Baker's yeast), this protein is ER degradation-enhancing alpha-mannosidase-like protein 1 (MNL1).